Reading from the N-terminus, the 186-residue chain is uncharacterized protein (186 aa).

This sequence belongs to the geranylgeranyl reductase family. ChlP subfamily.

This is an uncharacterized protein from Methanosarcina barkeri.